We begin with the raw amino-acid sequence, 244 residues long: 5-oxoprolinase subunit A (244 aa).

This sequence belongs to the LamB/PxpA family. Forms a complex composed of PxpA, PxpB and PxpC.

It catalyses the reaction 5-oxo-L-proline + ATP + 2 H2O = L-glutamate + ADP + phosphate + H(+). Its function is as follows. Catalyzes the cleavage of 5-oxoproline to form L-glutamate coupled to the hydrolysis of ATP to ADP and inorganic phosphate. The protein is 5-oxoprolinase subunit A of Escherichia coli O17:K52:H18 (strain UMN026 / ExPEC).